The chain runs to 682 residues: Serine/threonine-protein kinase PLK2 (682 aa).

Residues 25-67 (ACGGDSKKKRPQQPSEDGQSQAQVTPAAPHHHHHHSHSGPEIS) form a disordered region. Residues 36 to 48 (QQPSEDGQSQAQV) show a composition bias toward polar residues. The region spanning 79–331 (YCRGKVLGKG…LDDIIRHDFF (253 aa)) is the Protein kinase domain. Residues 85 to 93 (LGKGGFAKC) and Lys108 each bind ATP. Asp202 serves as the catalytic Proton acceptor. Residue Thr236 is modified to Phosphothreonine. The tract at residues 402–430 (TSITQQPSKHRTDEELQPPPTTFAKSGTS) is disordered. POLO box domains lie at 500–578 (WVTK…YMEE) and 598–682 (YLLQ…QRCN).

This sequence belongs to the protein kinase superfamily. Ser/Thr protein kinase family. CDC5/Polo subfamily. In terms of assembly, interacts with CIB1. Interacts with NSF; causing NSF dissociation from GRIA2. In terms of processing, catalytic activity is enhanced by phosphorylation of Thr-236.

The protein resides in the cytoplasm. It localises to the cytoskeleton. It is found in the microtubule organizing center. Its subcellular location is the centrosome. The protein localises to the centriole. The protein resides in the cell projection. It localises to the dendrite. The catalysed reaction is L-seryl-[protein] + ATP = O-phospho-L-seryl-[protein] + ADP + H(+). It catalyses the reaction L-threonyl-[protein] + ATP = O-phospho-L-threonyl-[protein] + ADP + H(+). Activated by phosphorylation of Thr-236. Once activated, activity is stimulated by binding target proteins. Its function is as follows. Tumor suppressor serine/threonine-protein kinase involved in synaptic plasticity, centriole duplication and G1/S phase transition. Polo-like kinases act by binding and phosphorylating proteins that are already phosphorylated on a specific motif recognized by the POLO box domains. Phosphorylates CPAP, NPM1, RAPGEF2, RASGRF1, SNCA, SIPA1L1 and SYNGAP1. Plays a key role in synaptic plasticity and memory by regulating the Ras and Rap protein signaling: required for overactivity-dependent spine remodeling by phosphorylating the Ras activator RASGRF1 and the Rap inhibitor SIPA1L1 leading to their degradation by the proteasome. Conversely, phosphorylates the Rap activator RAPGEF2 and the Ras inhibitor SYNGAP1, promoting their activity. Also regulates synaptic plasticity independently of kinase activity, via its interaction with NSF that disrupts the interaction between NSF and the GRIA2 subunit of AMPARs, leading to a rapid rundown of AMPAR-mediated current that occludes long term depression. Required for procentriole formation and centriole duplication by phosphorylating CPAP and NPM1, respectively. Its induction by p53/TP53 suggests that it may participate in the mitotic checkpoint following stress. This Rattus norvegicus (Rat) protein is Serine/threonine-protein kinase PLK2 (Plk2).